The following is a 224-amino-acid chain: MRTFALVCAAGSGKRFGGSTPKQFLFLEDKMVIEYSLCVFENSPFIDGVVILIPNGYKNIGDVLKEKYKKVLFWDYGEDERAKTVKKGLELIKGMCDFVAIHDAVRPFIDLELIEKLILEVKSSFAVAPAVSAKDTVKYVVDGYVQNTIPRENVYLVQTPQVFKFDLIYGAYEKFEDTCFTDDLQYVEALGVKPKIVENSSLNFKITTKEDMIFAKAIVEQFLK.

Belongs to the IspD/TarI cytidylyltransferase family. IspD subfamily.

The enzyme catalyses 2-C-methyl-D-erythritol 4-phosphate + CTP + H(+) = 4-CDP-2-C-methyl-D-erythritol + diphosphate. Its pathway is isoprenoid biosynthesis; isopentenyl diphosphate biosynthesis via DXP pathway; isopentenyl diphosphate from 1-deoxy-D-xylulose 5-phosphate: step 2/6. In terms of biological role, catalyzes the formation of 4-diphosphocytidyl-2-C-methyl-D-erythritol from CTP and 2-C-methyl-D-erythritol 4-phosphate (MEP). The chain is 2-C-methyl-D-erythritol 4-phosphate cytidylyltransferase from Caldicellulosiruptor saccharolyticus (strain ATCC 43494 / DSM 8903 / Tp8T 6331).